Here is a 512-residue protein sequence, read N- to C-terminus: Histidine ammonia-lyase (512 aa).

Positions 141-143 form a cross-link, 5-imidazolinone (Ala-Gly); the sequence is ASG. The residue at position 142 (Ser142) is a 2,3-didehydroalanine (Ser).

This sequence belongs to the PAL/histidase family. Post-translationally, contains an active site 4-methylidene-imidazol-5-one (MIO), which is formed autocatalytically by cyclization and dehydration of residues Ala-Ser-Gly.

Its subcellular location is the cytoplasm. The enzyme catalyses L-histidine = trans-urocanate + NH4(+). It functions in the pathway amino-acid degradation; L-histidine degradation into L-glutamate; N-formimidoyl-L-glutamate from L-histidine: step 1/3. This chain is Histidine ammonia-lyase, found in Bacillus velezensis (strain DSM 23117 / BGSC 10A6 / LMG 26770 / FZB42) (Bacillus amyloliquefaciens subsp. plantarum).